The sequence spans 349 residues: Isopentenyl-diphosphate delta-isomerase (349 aa).

9–10 (RK) contributes to the substrate binding site. Residues 65 to 67 (AMT), Ser95, and Asn124 contribute to the FMN site. 95–97 (STH) contributes to the substrate binding site. Position 154 (Gln154) interacts with substrate. Glu155 contributes to the Mg(2+) binding site. Residues Lys186, Ser211, Thr216, 262 to 264 (GLR), and 283 to 284 (SR) each bind FMN.

It belongs to the IPP isomerase type 2 family. As to quaternary structure, homooctamer. Dimer of tetramers. It depends on FMN as a cofactor. NADPH serves as cofactor. Mg(2+) is required as a cofactor.

The protein localises to the cytoplasm. The enzyme catalyses isopentenyl diphosphate = dimethylallyl diphosphate. Involved in the biosynthesis of isoprenoids. Catalyzes the 1,3-allylic rearrangement of the homoallylic substrate isopentenyl (IPP) to its allylic isomer, dimethylallyl diphosphate (DMAPP). This Staphylococcus aureus (strain N315) protein is Isopentenyl-diphosphate delta-isomerase.